A 79-amino-acid chain; its full sequence is MNRTNQLILGAVVLGSTLLAGCSSNAKIDQLSSDVQTLSAKVEQLSNDVNAMRSDVQAAKDDAARANQRLDNKVFRICK.

A signal peptide spans 1-21 (MNRTNQLILGAVVLGSTLLAG). Residue cysteine 22 is the site of N-palmitoyl cysteine attachment. The S-diacylglycerol cysteine moiety is linked to residue cysteine 22. Repeats lie at residues 25 to 35 (NAKIDQLSSDV) and 39 to 49 (SAKVEQLSNDV). A coiled-coil region spans residues 28–69 (IDQLSSDVQTLSAKVEQLSNDVNAMRSDVQAAKDDAARANQR). Lysine 79 carries the N6-murein peptidoglycan lysine modification.

This sequence belongs to the Lpp family. As to quaternary structure, homotrimer.

The protein resides in the cell outer membrane. It localises to the secreted. It is found in the cell wall. Plays an important role in virulence. A highly abundant outer membrane lipoprotein that controls the distance between the inner and outer membranes. The only protein known to be covalently linked to the peptidoglycan network (PGN). Also non-covalently binds the PGN. The link between the cell outer membrane and PGN contributes to maintenance of the structural and functional integrity of the cell envelope, and maintains the correct distance between the PGN and the outer membrane. The chain is Major outer membrane lipoprotein Lpp 2 from Salmonella typhimurium (strain LT2 / SGSC1412 / ATCC 700720).